A 160-amino-acid chain; its full sequence is uncharacterized protein (160 aa).

Residues 2–140 (MIIIPNNEIA…KARRLKPEIP (139 aa)) form the N-acetyltransferase domain.

This is an uncharacterized protein from Bacillus subtilis (strain 168).